We begin with the raw amino-acid sequence, 601 residues long: Casbene synthase, chloroplastic (601 aa).

The N-terminal 56 residues, 1–56 (MALPSAAMQSNPEKLNLFHRLSSLPTTSLEYGNNRFPFFSSSAKSHFKKPTQACLS), are a transit peptide targeting the chloroplast. Residues Asp355, Asp359, Asn499, Ser503, and Glu507 each contribute to the Mg(2+) site. A DDXXD motif motif is present at residues 355–359 (DDTID).

It belongs to the terpene synthase family. Mg(2+) serves as cofactor.

The protein resides in the plastid. The protein localises to the chloroplast. The enzyme catalyses (2E,6E,10E)-geranylgeranyl diphosphate = casbene + diphosphate. In terms of biological role, catalyzes the cyclization of geranylgeranyl diphosphate to casbene, a diterpene phytoalexin with antibacterial and antifungal activity. In Ricinus communis (Castor bean), this protein is Casbene synthase, chloroplastic.